A 1013-amino-acid polypeptide reads, in one-letter code: Tolloid-like protein 1 (1013 aa).

Residues 1-30 (MGLGTLSPRMLVWLVASGIVFYGELWVCAG) form the signal peptide. Positions 31-147 (LDYDYTFDGN…GQNEKNRVPR (117 aa)) are excised as a propeptide. In terms of domain architecture, Peptidase M12A spans 148 to 347 (AATSRTERIW…AQARKLYRCP (200 aa)). N-linked (GlcNAc...) asparagine glycosylation is present at Asn169. 4 cysteine pairs are disulfide-bonded: Cys190–Cys346, Cys210–Cys232, Cys212–Cys213, and Cys349–Cys375. Residue His240 participates in Zn(2+) binding. Residue Glu241 is part of the active site. Residues His244 and His250 each contribute to the Zn(2+) site. 2 consecutive CUB domains span residues 349–461 (CGET…YEAI) and 462–574 (CGGE…FFKE). N-linked (GlcNAc...) asparagine glycosylation is found at Asn359 and Asn390. 15 disulfide bridges follow: Cys402/Cys424, Cys462/Cys488, Cys515/Cys537, Cys578/Cys590, Cys586/Cys599, Cys601/Cys614, Cys618/Cys644, Cys671/Cys693, Cys734/Cys745, Cys741/Cys754, Cys756/Cys769, Cys774/Cys800, Cys827/Cys849, Cys887/Cys917, and Cys944/Cys966. The EGF-like 1; calcium-binding domain maps to 574–615 (EEDECAKPDRGGCEQRCLNTLGSYQCACEPGYELGPDRRSCE). One can recognise a CUB 3 domain in the interval 618–730 (CGGLLTKLNG…KGFKAHFFSD (113 aa)). N-linked (GlcNAc...) asparagine glycosylation is present at Asn626. The EGF-like 2; calcium-binding domain occupies 730 to 770 (DKDECSKDNGGCQHECVNTMGSYMCQCRNGFVLHDNKHDCK). CUB domains lie at 774 to 886 (CEQK…HSTE) and 887 to 1003 (CGGR…YKSI).

It depends on Zn(2+) as a cofactor.

It is found in the secreted. Its function is as follows. Protease which processes procollagen C-propeptides, such as chordin, pro-biglycan and pro-lysyl oxidase. Required for the embryonic development. Predominant protease, which in the development, influences dorsal-ventral patterning and skeletogenesis. The sequence is that of Tolloid-like protein 1 (TLL1) from Homo sapiens (Human).